Reading from the N-terminus, the 522-residue chain is Probable mannosyltransferase KTR5 (522 aa).

Residues 1–16 (MLLIRRTINAFLGCIH) are Cytoplasmic-facing. Residues 17 to 37 (CNLTATCILIAFVITMYVVLV) traverse the membrane as a helical; Signal-anchor for type II membrane protein segment. A stem region region spans residues 38–82 (SEPASVDGTMGNFLPFSKMDLATKRDRPFYSNCVNTQDYLLNPSY). The Lumenal portion of the chain corresponds to 38–522 (SEPASVDGTM…REDYLRQFGN (485 aa)). The catalytic stretch occupies residues 83–522 (IKQNASFVML…REDYLRQFGN (440 aa)). Asparagine 86 is a glycosylation site (N-linked (GlcNAc...) asparagine). The active-site Nucleophile is glutamate 363.

The protein belongs to the glycosyltransferase 15 family.

The protein localises to the membrane. Its function is as follows. Possible glycosyltransferase that transfers an alpha-D-mannosyl residue from GDP-mannose into lipid-linked oligosaccharide, forming an alpha-(1-&gt;2)-D-mannosyl-D-mannose linkage. This chain is Probable mannosyltransferase KTR5 (KTR5), found in Saccharomyces cerevisiae (strain ATCC 204508 / S288c) (Baker's yeast).